The chain runs to 616 residues: Schwannomin-interacting protein 1 homolog (616 aa).

Residues Glu-38 to Pro-50 show a composition bias toward acidic residues. 3 disordered regions span residues Glu-38 to Ser-71, Leu-204 to Phe-251, and Ser-292 to Gln-320. Polar residues-rich tracts occupy residues Ser-62–Ser-71 and Leu-204–Thr-217. The stretch at Leu-550 to Asn-594 forms a coiled coil.

Belongs to the SCHIP1 family. In terms of assembly, interacts with ex; the interaction results in recruitment of Schip1 to the apical cell membrane. Interacts with Tao; the interaction enhances Tao kinase activity. Interacts with Mer. As to expression, in eye disks of the third instar larvae, expressed in all cells (at protein level).

It is found in the cell junction. The protein localises to the adherens junction. Its subcellular location is the apical cell membrane. Its function is as follows. Regulator of the Hippo/SWH (Sav/Wts/Hpo) signaling pathway, a signaling pathway that plays a pivotal role in organ size control and tumor suppression by restricting proliferation and promoting apoptosis. The core of this pathway is composed of a kinase cascade wherein Hippo (hpo), in complex with its regulatory protein Salvador (sav), phosphorylates and activates Warts (wts) in complex with its regulatory protein Mats, which in turn phosphorylates and inactivates the Yorkie (yki) oncoprotein. Schip1 promotes kinase activity of Tao and enhances phosphorylation of hpo by Tao. The polypeptide is Schwannomin-interacting protein 1 homolog (Drosophila melanogaster (Fruit fly)).